The sequence spans 138 residues: 1,4-dihydroxy-2-naphthoyl-CoA hydrolase (138 aa).

Aspartate 15 is an active-site residue.

It belongs to the 4-hydroxybenzoyl-CoA thioesterase family. DHNA-CoA hydrolase subfamily.

It catalyses the reaction 1,4-dihydroxy-2-naphthoyl-CoA + H2O = 1,4-dihydroxy-2-naphthoate + CoA + H(+). The protein operates within cofactor biosynthesis; phylloquinone biosynthesis. It functions in the pathway quinol/quinone metabolism; 1,4-dihydroxy-2-naphthoate biosynthesis; 1,4-dihydroxy-2-naphthoate from chorismate: step 7/7. Functionally, catalyzes the hydrolysis of 1,4-dihydroxy-2-naphthoyl-CoA (DHNA-CoA) to 1,4-dihydroxy-2-naphthoate (DHNA), a reaction involved in phylloquinone (vitamin K1) biosynthesis. This chain is 1,4-dihydroxy-2-naphthoyl-CoA hydrolase, found in Trichodesmium erythraeum (strain IMS101).